Consider the following 198-residue polypeptide: Large ribosomal subunit protein uL5 (198 aa).

Belongs to the universal ribosomal protein uL5 family. As to quaternary structure, part of the 50S ribosomal subunit; part of the 5S rRNA/L5/L18/L25 subcomplex. Contacts the 5S rRNA and the P site tRNA. Forms a bridge to the 30S subunit in the 70S ribosome.

This is one of the proteins that bind and probably mediate the attachment of the 5S RNA into the large ribosomal subunit, where it forms part of the central protuberance. In the 70S ribosome it contacts protein S13 of the 30S subunit (bridge B1b), connecting the 2 subunits; this bridge is implicated in subunit movement. Contacts the P site tRNA; the 5S rRNA and some of its associated proteins might help stabilize positioning of ribosome-bound tRNAs. The chain is Large ribosomal subunit protein uL5 from Chlorobium phaeovibrioides (strain DSM 265 / 1930) (Prosthecochloris vibrioformis (strain DSM 265)).